The chain runs to 136 residues: Phosphoribosyl-AMP cyclohydrolase (136 aa).

D89 provides a ligand contact to Mg(2+). C90 contributes to the Zn(2+) binding site. The Mg(2+) site is built by D91 and D93. 2 residues coordinate Zn(2+): C106 and C113.

It belongs to the PRA-CH family. As to quaternary structure, homodimer. Mg(2+) is required as a cofactor. Zn(2+) serves as cofactor.

The protein localises to the cytoplasm. The enzyme catalyses 1-(5-phospho-beta-D-ribosyl)-5'-AMP + H2O = 1-(5-phospho-beta-D-ribosyl)-5-[(5-phospho-beta-D-ribosylamino)methylideneamino]imidazole-4-carboxamide. The protein operates within amino-acid biosynthesis; L-histidine biosynthesis; L-histidine from 5-phospho-alpha-D-ribose 1-diphosphate: step 3/9. In terms of biological role, catalyzes the hydrolysis of the adenine ring of phosphoribosyl-AMP. The polypeptide is Phosphoribosyl-AMP cyclohydrolase (Bifidobacterium longum subsp. infantis (strain ATCC 15697 / DSM 20088 / JCM 1222 / NCTC 11817 / S12)).